The primary structure comprises 959 residues: Lon protease homolog, mitochondrial (959 aa).

A mitochondrion-targeting transit peptide spans 1-67 (MAASTGYVRL…GPAIGGQWRG (67 aa)). Disordered stretches follow at residues 77-102 (GAFSGGEDASEGGAEEGAGGAGGSAG) and 218-257 (RQLEVEPEEPEAENKHKPRRKSKRGKKEAEDELSARHPAE). The segment covering 91–102 (EEGAGGAGGSAG) has biased composition (gly residues). Positions 124–370 (LPLIAITRNP…KALSLLKKEF (247 aa)) constitute a Lon N-terminal domain. A compositionally biased stretch (basic residues) spans 233–243 (HKPRRKSKRGK). Residues 244-256 (KEAEDELSARHPA) show a composition bias toward basic and acidic residues. ATP is bound at residue 523-530 (GPPGVGKT). In terms of domain architecture, Lon proteolytic spans 759-949 (VTPPGVVMGL…REIFDIAFPD (191 aa)). Catalysis depends on residues serine 855 and lysine 898.

Belongs to the peptidase S16 family. In terms of assembly, homohexamer. Organized in a ring with a central cavity. The ATP-binding and proteolytic domains (AP-domain) form a hexameric chamber, while the N-terminal domain is arranged as a trimer of dimers. DNA and RNA binding is stimulated by substrate and inhibited by ATP binding. Interacts with TWNK and mitochondrial DNA polymerase subunit POLG. In terms of tissue distribution, duodenum, heart, lung and liver, but not thymus.

It is found in the mitochondrion matrix. The catalysed reaction is Hydrolysis of proteins in presence of ATP.. Its activity is regulated as follows. Peptidase activity is subject to substrate inhibition by ATP. ATP-dependent serine protease that mediates the selective degradation of misfolded, unassembled or oxidatively damaged polypeptides as well as certain short-lived regulatory proteins in the mitochondrial matrix. Endogenous substrates include mitochondrial steroidogenic acute regulatory (StAR) protein, DELE1, helicase Twinkle (TWNK) and the large ribosomal subunit protein MRPL32/bL32m. MRPL32/bL32m is protected from degradation by LONP1 when it is bound to a nucleic acid (RNA), but TWNK is not. May also have a chaperone function in the assembly of inner membrane protein complexes. Participates in the regulation of mitochondrial gene expression and in the maintenance of the integrity of the mitochondrial genome. Binds to mitochondrial promoters and RNA in a single-stranded, site-specific, and strand-specific manner. May regulate mitochondrial DNA replication and/or gene expression using site-specific, single-stranded DNA binding to target the degradation of regulatory proteins binding to adjacent sites in mitochondrial promoters. This Homo sapiens (Human) protein is Lon protease homolog, mitochondrial.